Consider the following 86-residue polypeptide: Small ribosomal subunit protein bS20 (86 aa).

The interval 1–25 (MANIKSAIKRAKTSEKRRVANSQEK) is disordered.

The protein belongs to the bacterial ribosomal protein bS20 family.

Functionally, binds directly to 16S ribosomal RNA. This chain is Small ribosomal subunit protein bS20, found in Exiguobacterium sp. (strain ATCC BAA-1283 / AT1b).